We begin with the raw amino-acid sequence, 157 residues long: MIAIYPGSFDPITLGHLDIIERGVVLFEKVIVTVMYNPNKRPLFPVEKRIEQITKCTQHLPGVEVDSYKGLTVDYAKLRKAQVLLRGLRVLSDFEKELQMAHTNKTLAEDVQTIFLATNKEYSFLSSSTVKEIAQFGGSVSHMVPENVLRDLREYYR.

Position 8 (S8) interacts with substrate. ATP contacts are provided by residues 8–9 (SF) and H16. Substrate-binding residues include K40, T72, and R86. ATP is bound by residues 87–89 (GLR), E97, and 122–128 (YSFLSSS).

It belongs to the bacterial CoaD family. As to quaternary structure, homohexamer. Mg(2+) is required as a cofactor.

Its subcellular location is the cytoplasm. The enzyme catalyses (R)-4'-phosphopantetheine + ATP + H(+) = 3'-dephospho-CoA + diphosphate. Its pathway is cofactor biosynthesis; coenzyme A biosynthesis; CoA from (R)-pantothenate: step 4/5. Its function is as follows. Reversibly transfers an adenylyl group from ATP to 4'-phosphopantetheine, yielding dephospho-CoA (dPCoA) and pyrophosphate. The protein is Phosphopantetheine adenylyltransferase of Crocosphaera subtropica (strain ATCC 51142 / BH68) (Cyanothece sp. (strain ATCC 51142)).